The chain runs to 1177 residues: DNA-directed RNA polymerase subunit beta (1177 aa).

The segment covering 1147-1161 has biased composition (acidic residues); that stretch reads DDTEIEMRDTEDDDD. Residues 1147 to 1177 are disordered; that stretch reads DDTEIEMRDTEDDDDHQSADKLNVEVETTKE. Basic and acidic residues predominate over residues 1162-1177; it reads HQSADKLNVEVETTKE.

It belongs to the RNA polymerase beta chain family. As to quaternary structure, the RNAP catalytic core consists of 2 alpha, 1 beta, 1 beta' and 1 omega subunit. When a sigma factor is associated with the core the holoenzyme is formed, which can initiate transcription.

It carries out the reaction RNA(n) + a ribonucleoside 5'-triphosphate = RNA(n+1) + diphosphate. DNA-dependent RNA polymerase catalyzes the transcription of DNA into RNA using the four ribonucleoside triphosphates as substrates. The polypeptide is DNA-directed RNA polymerase subunit beta (Bacillus cereus (strain G9842)).